A 196-amino-acid polypeptide reads, in one-letter code: dTTP/UTP pyrophosphatase (196 aa).

Asp73 serves as the catalytic Proton acceptor.

It belongs to the Maf family. YhdE subfamily. Requires a divalent metal cation as cofactor.

It localises to the cytoplasm. It catalyses the reaction dTTP + H2O = dTMP + diphosphate + H(+). The catalysed reaction is UTP + H2O = UMP + diphosphate + H(+). Its function is as follows. Nucleoside triphosphate pyrophosphatase that hydrolyzes dTTP and UTP. May have a dual role in cell division arrest and in preventing the incorporation of modified nucleotides into cellular nucleic acids. This chain is dTTP/UTP pyrophosphatase, found in Myxococcus xanthus (strain DK1622).